The chain runs to 64 residues: Large ribosomal subunit protein bL35 (64 aa).

The segment covering 1-14 (MKQKTHKGTAKRVK) has biased composition (basic residues). The disordered stretch occupies residues 1–50 (MKQKTHKGTAKRVKITGSGKLRREQANRRHLLEGKPSKRTRRLKGTEDVA). A compositionally biased stretch (basic and acidic residues) spans 21 to 36 (LRREQANRRHLLEGKP).

This sequence belongs to the bacterial ribosomal protein bL35 family.

The sequence is that of Large ribosomal subunit protein bL35 from Corynebacterium diphtheriae (strain ATCC 700971 / NCTC 13129 / Biotype gravis).